A 370-amino-acid polypeptide reads, in one-letter code: F-box protein At3g20690 (370 aa).

In terms of domain architecture, F-box spans 1-45 (MMMSDLPHDLVEEILSRLPLISLKAMRSTCKTWNVLSKHRSFANK).

The chain is F-box protein At3g20690 from Arabidopsis thaliana (Mouse-ear cress).